Consider the following 599-residue polypeptide: Capsular polysaccharide biosynthesis protein CapD (599 aa).

Transmembrane regions (helical) follow at residues 12–32, 41–61, 79–99, and 102–122; these read ILIIIDSFIVTFSVFLGYAIL, IDLLVLSSVILLVSHHIFAYV, SVLKAVTSSIVVTLLLVSLLI, and SPFLRLYFITWMMHLLLIGGS.

It belongs to the polysaccharide synthase family.

It localises to the cell membrane. It functions in the pathway capsule biogenesis; capsule polysaccharide biosynthesis. Required for the biosynthesis of type 1 capsular polysaccharide. The protein is Capsular polysaccharide biosynthesis protein CapD (capD) of Staphylococcus aureus.